The sequence spans 161 residues: Suppressor of kinetochore protein 1 (161 aa).

The interval 102 to 161 (VLASNYLDIKPLLDTGCKTVANMIRGKSPEDIRKTFNIPNDFTPEEEEQIRKENEWAEDR) is interaction with the F-box domain of F-box proteins.

The protein belongs to the SKP1 family. Essential component of the E3 ubiquitin ligase Skp1-Cullin-1-F-box (SCF) complex. Interacts with cul1, fbh1, mcs2, pip1, pof1, pof2, pof3, pof4, pof5, pof6, pof7, pof8, pof9, pof10, pof11, pof12, pof13, pof14, pop1, pop2 and tfb3. Forms a complex with pof6 and sip1. Component of the RAVE complex composed of rav1, rav2 and skp1.

It localises to the cytoplasm. Its subcellular location is the nucleus. Required for cig2 degradation in the G2 and M phases of the cell cycle. Together with pof6, essential for septum processing and cell separation. Involved in mitotic progression, essential for the execution of anaphase B; required for coordinated structural alterations of mitotic spindles and segregation of nuclear membrane structures at anaphase. Involved in the DNA damage checkpoint pathway and maintenance of genome integrity. Component of the RAVE complex which is required for stable assembly of the vacuolar ATPase complex V-ATPase. The protein is Suppressor of kinetochore protein 1 of Schizosaccharomyces pombe (strain 972 / ATCC 24843) (Fission yeast).